Reading from the N-terminus, the 210-residue chain is Uracil phosphoribosyltransferase (210 aa).

Residues arginine 80, arginine 105, and aspartate 132 to serine 140 contribute to the 5-phospho-alpha-D-ribose 1-diphosphate site. Uracil-binding positions include isoleucine 195 and glycine 200 to alanine 202. Aspartate 201 is a binding site for 5-phospho-alpha-D-ribose 1-diphosphate.

Belongs to the UPRTase family. Requires Mg(2+) as cofactor.

The catalysed reaction is UMP + diphosphate = 5-phospho-alpha-D-ribose 1-diphosphate + uracil. It functions in the pathway pyrimidine metabolism; UMP biosynthesis via salvage pathway; UMP from uracil: step 1/1. Its activity is regulated as follows. Allosterically activated by GTP. Its function is as follows. Catalyzes the conversion of uracil and 5-phospho-alpha-D-ribose 1-diphosphate (PRPP) to UMP and diphosphate. This chain is Uracil phosphoribosyltransferase, found in Deinococcus radiodurans (strain ATCC 13939 / DSM 20539 / JCM 16871 / CCUG 27074 / LMG 4051 / NBRC 15346 / NCIMB 9279 / VKM B-1422 / R1).